The sequence spans 583 residues: DNA ligase (583 aa).

An ATP-binding site is contributed by glutamate 249. Lysine 251 (N6-AMP-lysine intermediate) is an active-site residue. The ATP site is built by arginine 256, arginine 271, glutamate 301, phenylalanine 341, arginine 416, and lysine 422.

This sequence belongs to the ATP-dependent DNA ligase family. It depends on Mg(2+) as a cofactor.

It carries out the reaction ATP + (deoxyribonucleotide)n-3'-hydroxyl + 5'-phospho-(deoxyribonucleotide)m = (deoxyribonucleotide)n+m + AMP + diphosphate.. Functionally, DNA ligase that seals nicks in double-stranded DNA during DNA replication, DNA recombination and DNA repair. The polypeptide is DNA ligase (Pyrobaculum calidifontis (strain DSM 21063 / JCM 11548 / VA1)).